A 357-amino-acid polypeptide reads, in one-letter code: Ribosomal RNA large subunit methyltransferase M (357 aa).

S-adenosyl-L-methionine is bound by residues serine 183, 216 to 219 (APGG), aspartate 235, aspartate 255, and aspartate 271. Lysine 300 acts as the Proton acceptor in catalysis.

The protein belongs to the class I-like SAM-binding methyltransferase superfamily. RNA methyltransferase RlmE family. RlmM subfamily. As to quaternary structure, monomer.

It localises to the cytoplasm. The enzyme catalyses cytidine(2498) in 23S rRNA + S-adenosyl-L-methionine = 2'-O-methylcytidine(2498) in 23S rRNA + S-adenosyl-L-homocysteine + H(+). In terms of biological role, catalyzes the 2'-O-methylation at nucleotide C2498 in 23S rRNA. In Pseudomonas fluorescens (strain ATCC BAA-477 / NRRL B-23932 / Pf-5), this protein is Ribosomal RNA large subunit methyltransferase M.